Consider the following 1188-residue polypeptide: AT-rich interactive domain-containing protein 5B (1188 aa).

Residue Lys130 forms a Glycyl lysine isopeptide (Lys-Gly) (interchain with G-Cter in SUMO2) linkage. The segment at 251-277 (RPRKKKPCPQRRDSFSGVKDSNNNSDG) is disordered. Ser264 carries the post-translational modification Phosphoserine. The region spanning 318–410 (RADEQAFLVA…LILPYERFIK (93 aa)) is the ARID domain. At Lys336 the chain carries N6,N6-dimethyllysine. The tract at residues 412-611 (EEDKPLPPIK…QPPLANQNET (200 aa)) is disordered. Lys445 participates in a covalent cross-link: Glycyl lysine isopeptide (Lys-Gly) (interchain with G-Cter in SUMO2). The segment covering 446–458 (HEIPKSKKEKENA) has biased composition (basic and acidic residues). Residues Lys494 and Lys496 each participate in a glycyl lysine isopeptide (Lys-Gly) (interchain with G-Cter in SUMO2) cross-link. Residues 597–609 (SFPTTQPPLANQN) are compositionally biased toward polar residues. Residues Lys767, Lys774, Lys803, and Lys810 each participate in a glycyl lysine isopeptide (Lys-Gly) (interchain with G-Cter in SUMO2) cross-link. Disordered regions lie at residues 846 to 874 (HHLHNEQTSKYPSRDMYRESENSSFPSHR) and 891 to 918 (DKKSAAAEAPTDDQPTDLSLPKNPHKPT). Residues 847-866 (HLHNEQTSKYPSRDMYRESE) are compositionally biased toward basic and acidic residues. Glycyl lysine isopeptide (Lys-Gly) (interchain with G-Cter in SUMO2) cross-links involve residues Lys893, Lys916, Lys920, and Lys935. The disordered stretch occupies residues 956–978 (RVSPMTMSGPKKYPESLSRSGKP). Residues Lys988, Lys1000, and Lys1013 each participate in a glycyl lysine isopeptide (Lys-Gly) (interchain with G-Cter in SUMO2) cross-link. The segment at 1028–1070 (ARAVSPLDPSKEVSGKEKASEQESEGSKAAHGGHSGGGSEGHK) is disordered. Ser1032 is subject to Phosphoserine. Basic and acidic residues predominate over residues 1036–1055 (PSKEVSGKEKASEQESEGSK). Glycyl lysine isopeptide (Lys-Gly) (interchain with G-Cter in SUMO2) cross-links involve residues Lys1055 and Lys1070. Ser1133 is subject to Phosphoserine.

This sequence belongs to the ARID5B family. In terms of processing, methylation at Lys-336 prevents DNA-binding. Demethylation by PHF2 promotes recruitment of the PHF2-ARID5B complex to promoters. In terms of tissue distribution, widely expressed, including in liver (at protein level).

The protein resides in the nucleus. Its function is as follows. Transcription coactivator that binds to the 5'-AATA[CT]-3' core sequence and plays a key role in adipogenesis and liver development. Acts by forming a complex with phosphorylated PHF2, which mediates demethylation at Lys-336, leading to target the PHF2-ARID5B complex to target promoters, where PHF2 mediates demethylation of dimethylated 'Lys-9' of histone H3 (H3K9me2), followed by transcription activation of target genes. The PHF2-ARID5B complex acts as a coactivator of HNF4A in liver. Required for adipogenesis: regulates triglyceride metabolism in adipocytes by regulating expression of adipogenic genes. Overexpression leads to induction of smooth muscle marker genes, suggesting that it may also act as a regulator of smooth muscle cell differentiation and proliferation. Represses the cytomegalovirus enhancer. The sequence is that of AT-rich interactive domain-containing protein 5B (ARID5B) from Homo sapiens (Human).